Consider the following 311-residue polypeptide: Protein nfe2 (311 aa).

Functionally, responsible for the nodulation efficiency and competitive ability of strain GR4 on alfalfa roots. This is Protein nfe2 (nfe2) from Rhizobium meliloti (Ensifer meliloti).